Consider the following 708-residue polypeptide: Leukotoxin translocation ATP-binding protein LktB (708 aa).

A Peptidase C39 domain is found at 1–126; it reads MEANHQRNDL…ACYQGQLILV (126 aa). Residues 155–437 form the ABC transmembrane type-1 domain; that stretch reads FLETLIVSIF…LAQLWQDFQQ (283 aa). 5 helical membrane-spanning segments follow: residues 159–179, 192–212, 270–290, 296–316, and 389–409; these read LIVS…FQVV, LNII…LSGL, ALTS…MWYY, LVIL…SPIL, and VMVI…LSIG. An ABC transporter domain is found at 469-704; it reads ISFKNIRFRY…SNGLYSYLHQ (236 aa). An ATP-binding site is contributed by 503 to 510; that stretch reads GRSGSGKS.

It belongs to the ABC transporter superfamily. Protein-1 exporter (TC 3.A.1.109) family. In terms of assembly, homodimer.

It localises to the cell inner membrane. The catalysed reaction is ATP + H2O + proteinSide 1 = ADP + phosphate + proteinSide 2.. Functionally, part of the ABC transporter complex LktBD involved in leukotoxin export. Transmembrane domains (TMD) form a pore in the inner membrane and the ATP-binding domain (NBD) is responsible for energy generation. This Mannheimia haemolytica (Pasteurella haemolytica) protein is Leukotoxin translocation ATP-binding protein LktB (lktB).